The primary structure comprises 24 residues: Citropin-3.1.2 (24 aa).

In terms of tissue distribution, expressed by the dorsal and submental skin glands.

It is found in the secreted. This chain is Citropin-3.1.2, found in Ranoidea citropa (Australian Blue Mountains tree frog).